Here is a 902-residue protein sequence, read N- to C-terminus: Cytosolic 10-formyltetrahydrofolate dehydrogenase (902 aa).

The segment at 1–310 (MKIAVIGQSL…LASNFFKGAA (310 aa)) is hydrolase domain. S9 carries the phosphoserine modification. At K38 the chain carries N6-succinyllysine. Residue 88–90 (QFI) coordinates (6R)-10-formyltetrahydrofolate. H106 functions as the Proton donor in the catalytic mechanism. Residue D142 participates in (6R)-10-formyltetrahydrofolate binding. The Carrier domain maps to 318-395 (EAELVTAEAV…DFIQLLVRKL (78 aa)). S354 bears the O-(pantetheine 4'-phosphoryl)serine mark. Positions 417–902 (TVRMPHQLFI…LRVKTVTFEY (486 aa)) are aldehyde dehydrogenase domain. NADP(+)-binding positions include 571-573 (IPW) and 597-600 (KPAQ). Phosphoserine is present on residues S629 and S631. Residues 630–635 (GSLVGQ) and 650–651 (GS) contribute to the NADP(+) site. N6-succinyllysine is present on K660. E673 serves as the catalytic Proton acceptor. An NADP(+)-binding site is contributed by 673-674 (EL). C707 serves as the catalytic Proton donor. K757 serves as a coordination point for NADP(+). An N6-succinyllysine modification is found at K767. Residue 804 to 806 (ESF) participates in NADP(+) binding. S825 carries the post-translational modification Phosphoserine. K882 is modified (N6-acetyllysine).

The protein in the N-terminal section; belongs to the GART family. In the C-terminal section; belongs to the aldehyde dehydrogenase family. ALDH1L subfamily. Homotetramer. Phosphopantetheinylation at Ser-354 by AASDHPPT is required for the formyltetrahydrofolate dehydrogenase activity. Highly expressed in liver, pancreas and kidney.

The protein localises to the cytoplasm. It localises to the cytosol. It carries out the reaction (6R)-10-formyltetrahydrofolate + NADP(+) + H2O = (6S)-5,6,7,8-tetrahydrofolate + CO2 + NADPH + H(+). In terms of biological role, cytosolic 10-formyltetrahydrofolate dehydrogenase that catalyzes the NADP(+)-dependent conversion of 10-formyltetrahydrofolate to tetrahydrofolate and carbon dioxide. May also have an NADP(+)-dependent aldehyde dehydrogenase activity towards formaldehyde, acetaldehyde, propionaldehyde, and benzaldehyde. The chain is Cytosolic 10-formyltetrahydrofolate dehydrogenase from Homo sapiens (Human).